A 628-amino-acid chain; its full sequence is Nucleoside-triphosphatase 2 (628 aa).

A signal peptide spans 1–25 (MWLPVYVPLLLVFGVSLSLPHGSLG). The active-site Proton acceptor is Glu236. Residue Asn432 is glycosylated (N-linked (GlcNAc...) asparagine).

It belongs to the GDA1/CD39 NTPase family. Homotetramer.

It is found in the secreted. The protein resides in the parasitophorous vacuole. It catalyses the reaction a ribonucleoside 5'-triphosphate + H2O = a ribonucleoside 5'-diphosphate + phosphate + H(+). Its function is as follows. May perform an important processing step in the conversion of high energy nucleotides prior to uptake by the parasite. NTPAse-II has a specific activity 4.5-fold lower than NTPAse-I in hydrolysis of ATP. The primary difference between these isozymes lies in their ability to hydrolyze nucleoside triphosphate versus diphosphate substrates. While NTPAse-II hydrolyzes ATP to ADP and ADP to AMP at almost the same rate, NTPAse-I hydrolyzes ADP to AMP at a much slower rate (0.7% of the rate for ATP). The sequence is that of Nucleoside-triphosphatase 2 (NTP1) from Toxoplasma gondii.